The primary structure comprises 230 residues: Cytochrome b6-f complex iron-sulfur subunit, chloroplastic (230 aa).

The transit peptide at 1–51 (MASFTLSSATPSQLCSSKNGMFAPSLALAKAGRVNVLISKERIRGMKLTCQ) directs the protein to the chloroplast. Residues 73-93 (LLGALSLPTGYMLLPYASFFV) traverse the membrane as a helical segment. A Rieske domain is found at 116–212 (AAEWLKTHAP…CDVDDGKVVF (97 aa)). Residues Cys158, His160, Cys176, and His179 each contribute to the [2Fe-2S] cluster site. An intrachain disulfide couples Cys163 to Cys178.

Belongs to the Rieske iron-sulfur protein family. In terms of assembly, the 4 large subunits of the cytochrome b6-f complex are cytochrome b6, subunit IV (17 kDa polypeptide, petD), cytochrome f and the Rieske protein, while the 4 small subunits are petG, petL, petM and petN. The complex functions as a dimer. [2Fe-2S] cluster serves as cofactor.

It localises to the plastid. Its subcellular location is the chloroplast thylakoid membrane. It catalyses the reaction 2 oxidized [plastocyanin] + a plastoquinol + 2 H(+)(in) = 2 reduced [plastocyanin] + a plastoquinone + 4 H(+)(out). Functionally, component of the cytochrome b6-f complex, which mediates electron transfer between photosystem II (PSII) and photosystem I (PSI), cyclic electron flow around PSI, and state transitions. The chain is Cytochrome b6-f complex iron-sulfur subunit, chloroplastic (petC) from Spinacia oleracea (Spinach).